Here is a 98-residue protein sequence, read N- to C-terminus: DNA-binding protein Fis (98 aa).

Positions 74-93 (QTRAATMLGINRGTLRKKLK) form a DNA-binding region, H-T-H motif.

Belongs to the transcriptional regulatory Fis family. As to quaternary structure, homodimer.

Its function is as follows. Activates ribosomal RNA transcription. Plays a direct role in upstream activation of rRNA promoters. In Histophilus somni (strain 2336) (Haemophilus somnus), this protein is DNA-binding protein Fis.